The sequence spans 256 residues: POU domain class 2-associating factor 1 (256 aa).

Residues methionine 1–arginine 23 are disordered. In terms of domain architecture, OCA spans alanine 16–histidine 38.

The protein belongs to the POU2AF family. Interacts with POU2F1/OCT1 and POU2F2/OCT2; the interaction increases POU2F1 and POU2F2 transactivation activity. In terms of processing, ubiquitinated; mediated by SIAH1 or SIAH2 and leading to its subsequent proteasomal degradation. B-cell specific. Detected in mainly in spleen, but also in thymus, periphral blood leukocyte and small intestine.

The protein localises to the nucleus. Transcriptional coactivator that specifically associates with either POU2F1/OCT1 or POU2F2/OCT2. It boosts the POU2F1/OCT1 mediated promoter activity and to a lesser extent, that of POU2F2/OCT2. It recognizes the POU domains of POU2F1/OCT1 and POU2F2/OCT2. It is essential for the response of B-cells to antigens and required for the formation of germinal centers. Regulates IL6 expression in B cells as POU2F2/OCT2 coactivator. The polypeptide is POU domain class 2-associating factor 1 (Homo sapiens (Human)).